We begin with the raw amino-acid sequence, 237 residues long: Ribonuclease PH (237 aa).

Residues R86 and 124–126 (GTR) each bind phosphate.

Belongs to the RNase PH family. Homohexameric ring arranged as a trimer of dimers.

The enzyme catalyses tRNA(n+1) + phosphate = tRNA(n) + a ribonucleoside 5'-diphosphate. Phosphorolytic 3'-5' exoribonuclease that plays an important role in tRNA 3'-end maturation. Removes nucleotide residues following the 3'-CCA terminus of tRNAs; can also add nucleotides to the ends of RNA molecules by using nucleoside diphosphates as substrates, but this may not be physiologically important. Probably plays a role in initiation of 16S rRNA degradation (leading to ribosome degradation) during starvation. This is Ribonuclease PH from Nitrobacter winogradskyi (strain ATCC 25391 / DSM 10237 / CIP 104748 / NCIMB 11846 / Nb-255).